Reading from the N-terminus, the 115-residue chain is U3-lycotoxin-Ls1k (115 aa).

Residues 1-20 (MKFELLFGVLLVTLFSYSSA) form the signal peptide. Positions 21–44 (EMLDDFDQADEDELLSLIEKEEAR) are excised as a propeptide. 4 disulfides stabilise this stretch: C48–C63, C55–C72, C62–C87, and C74–C85.

It belongs to the neurotoxin 19 (CSTX) family. 01 subfamily. Expressed by the venom gland.

The protein resides in the secreted. In Lycosa singoriensis (Wolf spider), this protein is U3-lycotoxin-Ls1k.